Reading from the N-terminus, the 345-residue chain is ATP-dependent (S)-NAD(P)H-hydrate dehydratase (345 aa).

A YjeF C-terminal domain is found at 9 to 332 (ILSLARSMIP…DMVGEVYEEV (324 aa)). (6S)-NADPHX contacts are provided by residues Gly-113 and 170 to 176 (NVMEFKR). ATP is bound by residues 208-212 (KGPSD) and 241-250 (GGLKRVGGQG). Asp-251 contacts (6S)-NADPHX.

It belongs to the NnrD/CARKD family. Mg(2+) is required as a cofactor.

Its subcellular location is the cytoplasm. It catalyses the reaction (6S)-NADHX + ATP = ADP + phosphate + NADH + H(+). The catalysed reaction is (6S)-NADPHX + ATP = ADP + phosphate + NADPH + H(+). Catalyzes the dehydration of the S-form of NAD(P)HX at the expense of ATP, which is converted to ADP. Together with NAD(P)HX epimerase, which catalyzes the epimerization of the S- and R-forms, the enzyme allows the repair of both epimers of NAD(P)HX, a damaged form of NAD(P)H that is a result of enzymatic or heat-dependent hydration. This Cryptococcus neoformans var. neoformans serotype D (strain JEC21 / ATCC MYA-565) (Filobasidiella neoformans) protein is ATP-dependent (S)-NAD(P)H-hydrate dehydratase.